A 143-amino-acid chain; its full sequence is Transcriptional regulator SlyA (143 aa).

One can recognise an HTH marR-type domain in the interval 2–135 (ESTLGSDLAR…LSTLVQKLEQ (134 aa)). The segment at residues 49–72 (QIQLAKAIGIEQPSLVRTLDQLEE) is a DNA-binding region (H-T-H motif).

This sequence belongs to the SlyA family. Homodimer.

Transcription regulator that can specifically activate or repress expression of target genes. Regulates the cpm operon, which contains cpmA, cpmB, cpmC, cpmD, cpmE, cpmF, cpmG and cpmH, involved in carbapenem-like antibiotic production. This chain is Transcriptional regulator SlyA, found in Photorhabdus laumondii subsp. laumondii (strain DSM 15139 / CIP 105565 / TT01) (Photorhabdus luminescens subsp. laumondii).